Consider the following 480-residue polypeptide: MQHRPHLLLISLTIMSVCGGSNGLTDQLNNKNLTMPLLPIEFHKENTVTNDWIPEGEEDDDYLDLEKLLSEDDDYIDIIDAVSPTDSEASAGNILQLFQGKSRIQRLNILNAKFAFSLYRALKDQANAFDNIFIAPVGISTAMGMISLGLKGETHEQVHSVLHFRDFVNASSKYEILTIHNLFRKLTHRLFRRNFGYTLRSVNDLYVQKQFPIREDFKAKVREYYFAEAQAADFSDPAFISKANNHILKVTKGLIKEALENVDPATQMMILNCIYFKGTWVNKFPVEMTHNHNFRLNEREVVKVSMMQTKGNFLAANDQELACDVLQLEYVGGISMLIVVPHKLSGMKTLEAQLTPQVVERWQKSMTNRTREVLLPKFKLEKNYNLVEALKSMGVTELFDKNGNMSGISDQGITMDLFKHQGTITVNEEGTQAAAVTTVGFMPLSTQVRFTVDRPFLFLVYEHRTSCLLFMGKVANPVRS.

The first 19 residues, 1–19 (MQHRPHLLLISLTIMSVCG), serve as a signal peptide directing secretion. The N-linked (GlcNAc...) asparagine glycan is linked to Asn-32. A run of 2 repeats spans residues 56–66 (GEEDDDYLDLE) and 70–80 (SEDDDYIDIID). A 2 X 11 AA approximate repeats, Asp/Glu-rich (acidic) (hirudin-like) region spans residues 56–80 (GEEDDDYLDLEKLLSEDDDYIDIID). 2 positions are modified to sulfotyrosine: Tyr-62 and Tyr-75. N-linked (GlcNAc...) asparagine glycosylation occurs at Asn-169. Residues 173 to 193 (KYEILTIHNLFRKLTHRLFRR) are glycosaminoglycan-binding site. N-linked (GlcNAc...) asparagine glycosylation is found at Asn-368 and Asn-404.

The protein belongs to the serpin family. Post-translationally, N-glycosylated; different glycan composition appears to lead to two forms of this protein (56 and 60 kDa).

Its function is as follows. Thrombin inhibitor activated by the glycosaminoglycans, heparin or dermatan sulfate. In the presence of the latter, HC-II becomes the predominant thrombin inhibitor in place of antithrombin III (AT). The sequence is that of Heparin cofactor 2 (SERPIND1) from Oryctolagus cuniculus (Rabbit).